The sequence spans 185 residues: NEDD8-conjugating enzyme UBE2F (185 aa).

A disordered region spans residues 1–29 (MLTLASKLKRDDGVKGSRTSSTTSDSTRR). The interaction with uba3 stretch occupies residues 1-29 (MLTLASKLKRDDGVKGSRTSSTTSDSTRR). The 154-residue stretch at 32–185 (VRDRLLVKEV…VEDYIKRYAR (154 aa)) folds into the UBC core domain. Cys116 (glycyl thioester intermediate) is an active-site residue.

This sequence belongs to the ubiquitin-conjugating enzyme family. UBE2F subfamily.

It carries out the reaction [E1 NEDD8-activating enzyme]-S-[NEDD8 protein]-yl-L-cysteine + [E2 NEDD8-conjugating enzyme]-L-cysteine = [E1 NEDD8-activating enzyme]-L-cysteine + [E2 NEDD8-conjugating enzyme]-S-[NEDD8-protein]-yl-L-cysteine.. It participates in protein modification; protein neddylation. Accepts the ubiquitin-like protein NEDD8 from the UBA3-NAE1 E1 complex and catalyzes its covalent attachment to other proteins. Together with the E3 ubiquitin ligase rnf7/rbx2, specifically neddylates cullin-5 (cul5). Does not neddylate cul1, cul2, cul3, cul4a or cul4b. This chain is NEDD8-conjugating enzyme UBE2F (ube2f), found in Xenopus tropicalis (Western clawed frog).